The chain runs to 347 residues: Protein RecA (347 aa).

67 to 74 (GPESSGKT) provides a ligand contact to ATP.

This sequence belongs to the RecA family. The protein migrates as a 40 kDa protein in strains 69A and NCTC 11637. When overexpressed in E.coli a 38 kDa protein is made which is unable to complement the E.coli deletion mutant. It has been suggested this size difference is due to a post-translational modification.

The protein localises to the cytoplasm. Can catalyze the hydrolysis of ATP in the presence of single-stranded DNA, the ATP-dependent uptake of single-stranded DNA by duplex DNA, and the ATP-dependent hybridization of homologous single-stranded DNAs. It interacts with LexA causing its activation and leading to its autocatalytic cleavage. In terms of biological role, deletion of this gene leads to the inability of the bacteria to perform homologous recombination, and markedly increases UV sensitivity. The protein is Protein RecA of Helicobacter pylori (strain ATCC 700392 / 26695) (Campylobacter pylori).